A 905-amino-acid chain; its full sequence is Dopamine D2-like receptor (905 aa).

The tract at residues 1–23 (MLSPFDWRRGISSSGTGGTMAAQ) is disordered. At 1–377 (MLSPFDWRRG…GELRVVDHNY (377 aa)) the chain is on the extracellular side. N88, N146, N156, N166, N174, N257, N314, and N343 each carry an N-linked (GlcNAc...) asparagine glycan. The chain crosses the membrane as a helical span at residues 378–398 (WALILILFPILTLFGNILVIL). Residues 399–416 (SVCRERSLQTVTNYFIVS) lie on the Cytoplasmic side of the membrane. A helical membrane pass occupies residues 417–437 (LAIADLLVAVVVMPFAVYFLV). Over 438-450 (NGAWALPDVVCDF) the chain is Extracellular. An intrachain disulfide couples C448 to C525. Residues 451 to 471 (YIAMDVICSTSSIFNLVAISI) traverse the membrane as a helical segment. Over 472–493 (DRYIAVTQPIKYAKHKNSRRVC) the chain is Cytoplasmic. Residues 494 to 514 (LTILLVWAISAAIGSPIVLGL) form a helical membrane-spanning segment. Over 515-531 (NNTPNREPDVCAFYNAD) the chain is Extracellular. A helical membrane pass occupies residues 532–552 (FILYSSLSSFYIPCIIMVFLY). Over 553-830 (WNIFKALRSR…AKKERKATKT (278 aa)) the chain is Cytoplasmic. Disordered stretches follow at residues 600 to 631 (SRHA…ISPD), 702 to 753 (ATSA…SVGV), and 780 to 799 (DSTL…KNSQ). A compositionally biased stretch (low complexity) spans 702–722 (ATSAAPRSSGSPPDSPLPSGA). Residues 723-734 (TLQRSSVSSQRR) show a composition bias toward polar residues. The span at 735–746 (PTGDDSPKRGEP) shows a compositional bias: basic and acidic residues. Residues 831 to 851 (LAIVLGVFLFCWLPFFSCNIM) traverse the membrane as a helical segment. Residues 852–869 (DAMCAKFKKDCRPGLTAY) are Extracellular-facing. A helical membrane pass occupies residues 870-890 (MMTTWLGYINSFVNPVIYTIF). The Cytoplasmic portion of the chain corresponds to 891-905 (NPEFRKAFKKIMHMG).

It belongs to the G-protein coupled receptor 1 family. As to expression, highest expression is in adult heads.

It is found in the cell membrane. Functionally, receptor for dopamine. The activity of this receptor is mediated by G proteins which inhibit adenylyl cyclase. The protein is Dopamine D2-like receptor of Drosophila melanogaster (Fruit fly).